The sequence spans 496 residues: Cytochrome P450 71D180 (496 aa).

The chain crosses the membrane as a helical; Signal-anchor for type II membrane protein span at residues Met1–Met21. Cys435 is a heme binding site. The interval Met471–Ser496 is disordered.

Belongs to the cytochrome P450 family. Heme is required as a cofactor. Mostly expressed in flowers and stems, and, to a lower extent, in leaves.

It is found in the membrane. It carries out the reaction gamma-terpinene + 2 reduced [NADPH--hemoprotein reductase] + 2 O2 = carvacrol + 2 oxidized [NADPH--hemoprotein reductase] + 3 H2O + 2 H(+). The catalysed reaction is (4S)-limonene + reduced [NADPH--hemoprotein reductase] + O2 = (1S,5R)-carveol + oxidized [NADPH--hemoprotein reductase] + H2O + H(+). It catalyses the reaction (4R)-limonene + reduced [NADPH--hemoprotein reductase] + O2 = (1R,5S)-carveol + oxidized [NADPH--hemoprotein reductase] + H2O + H(+). Its pathway is secondary metabolite biosynthesis; terpenoid biosynthesis. Functionally, involved in the biosynthesis of phenolic monoterpenes natural products thymol and carvacrol which have a broad range of biological activities acting as antimicrobial compounds, insecticides, antioxidants and pharmaceutical agents. Catalyzes the C2-hydroxylation of gamma-terpinene to produce carvacrol. Also mediates the C6-hydroxylation of (4S)-limonene and (4R)-limonene to form carveol. The sequence is that of Cytochrome P450 71D180 from Origanum vulgare (Wild marjoram).